The primary structure comprises 186 residues: Lipid A palmitoyltransferase PagP (186 aa).

The signal sequence occupies residues 1–25; it reads MKVSKYVAIFFFVFIQLISVGKVFA. Catalysis depends on residues His58, Asp101, and Ser102.

It belongs to the lipid A palmitoyltransferase family. As to quaternary structure, homodimer.

Its subcellular location is the cell outer membrane. The enzyme catalyses lipid A (E. coli) + a 1-hexadecanoyl-2-acyl-sn-glycero-3-phosphocholine = hepta-acyl lipid A (E. coli) + a 2-acyl-sn-glycero-3-phosphocholine. It carries out the reaction lipid IIA + a 1-hexadecanoyl-2-acyl-sn-glycero-3-phosphocholine = lipid IIB + a 2-acyl-sn-glycero-3-phosphocholine. It catalyses the reaction lipid IVA (E. coli) + a 1-hexadecanoyl-2-acyl-sn-glycero-3-phosphocholine = lipid IVB (E. coli) + a 2-acyl-sn-glycero-3-phosphocholine. Its function is as follows. Transfers a palmitate residue from the sn-1 position of a phospholipid to the N-linked hydroxymyristate on the proximal unit of lipid A or its precursors. The chain is Lipid A palmitoyltransferase PagP from Escherichia coli O6:K15:H31 (strain 536 / UPEC).